Reading from the N-terminus, the 1083-residue chain is Rho GTPase-activating protein 39 (1083 aa).

An N-acetylserine modification is found at serine 2. WW domains lie at 25-58 (NTRLEWVEIIEPRTRERMYANLVTGECVWDPPAG) and 63-97 (RTSENQWWELFDPNTSRFYYYNASTQRTVWHRPQG). Positions 110-154 (KQNTESPRASAESSPGRGSSVSREGSTSSSLEPEPDTEKAQELPA) are disordered. Low complexity predominate over residues 117 to 141 (RASAESSPGRGSSVSREGSTSSSLE). Serine 169 is subject to Phosphoserine. Residues 226 to 369 (AAQGNGYAPD…NKQGPPSPCQ (144 aa)) are disordered. The span at 245–256 (PSGSQHSPSLQT) shows a compositional bias: polar residues. The span at 268 to 280 (PERRPSPFLKRAE) shows a compositional bias: basic and acidic residues. Serine 286, serine 384, serine 388, serine 406, and serine 407 each carry phosphoserine. 2 disordered regions span residues 405-545 (GSSP…EAEG) and 570-599 (MKQRSSWDSQQDGSGYESDGALPLPMPGPV). Composition is skewed to polar residues over residues 474 to 488 (SWSSQQDTLSSTGYS) and 573 to 582 (RSSWDSQQDG). Phosphoserine is present on residues serine 604, serine 690, serine 715, and serine 726. The MyTH4 domain occupies 722 to 879 (WSSESIKKPM…PNVEEIRHAK (158 aa)). The 189-residue stretch at 890–1078 (SALQEVMGMQ…VLIQHLDTSF (189 aa)) folds into the Rho-GAP domain.

Its subcellular location is the nucleus. This Homo sapiens (Human) protein is Rho GTPase-activating protein 39 (ARHGAP39).